Here is a 456-residue protein sequence, read N- to C-terminus: MAEKHQDKMTNAMNNSKLYLIQSFGCQMNERDAESLAGMLEDLGYCPTSAQEEADIILLNTCCVRETAESKVFGLLGRLRKLKVAKPDLILGVCGCMSQQEDAAKRIRRSFPFVDLIFGTHNIHELPRMIHQVQENHEAVLEVWATEKGITESIPVKRKDKLKAWVTIMYGCNNFCTYCIVPYVRGRERSRQPEDIIDEIKELVQEGYKEVTLLGQNVNSYGKDFKNNYRFADLLMAIDDITGLERVRFMTSHPRDFDQRLIEVVASAKKVCEHYHLPAQAGSNRVLKMMNRGYTREHYLELIRKIKERVPNASITADLMVGFPGETEEDFQETLDLVKQVRYDSAFTFVYNIRSGTPAAKLEQVSEEVKSERIQRLIELQNLISLENNQREEGRVLEVLVEGETKTNPDLLAGRTRTNKLVVFQGSGHLPGQLVQIRITKGRPNLLEGEVVPNGT.

One can recognise an MTTase N-terminal domain in the interval 17–135 (KLYLIQSFGC…LPRMIHQVQE (119 aa)). Residues Cys26, Cys62, Cys96, Cys172, Cys176, and Cys179 each contribute to the [4Fe-4S] cluster site. Positions 158–387 (RKDKLKAWVT…IELQNLISLE (230 aa)) constitute a Radical SAM core domain. Residues 390-453 (QREEGRVLEV…PNLLEGEVVP (64 aa)) enclose the TRAM domain.

This sequence belongs to the methylthiotransferase family. MiaB subfamily. In terms of assembly, monomer. [4Fe-4S] cluster is required as a cofactor.

It localises to the cytoplasm. It catalyses the reaction N(6)-dimethylallyladenosine(37) in tRNA + (sulfur carrier)-SH + AH2 + 2 S-adenosyl-L-methionine = 2-methylsulfanyl-N(6)-dimethylallyladenosine(37) in tRNA + (sulfur carrier)-H + 5'-deoxyadenosine + L-methionine + A + S-adenosyl-L-homocysteine + 2 H(+). Catalyzes the methylthiolation of N6-(dimethylallyl)adenosine (i(6)A), leading to the formation of 2-methylthio-N6-(dimethylallyl)adenosine (ms(2)i(6)A) at position 37 in tRNAs that read codons beginning with uridine. This Desulforamulus reducens (strain ATCC BAA-1160 / DSM 100696 / MI-1) (Desulfotomaculum reducens) protein is tRNA-2-methylthio-N(6)-dimethylallyladenosine synthase.